The primary structure comprises 48 residues: Sulfide dehydrogenase [flavocytochrome c] flavoprotein chain (48 aa).

40 to 46 (VTCPFSN) contacts FAD.

In terms of assembly, dimer of one cytochrome and one flavoprotein.

The protein resides in the periplasm. The enzyme catalyses hydrogen sulfide + 2 Fe(III)-[cytochrome c] = sulfur + 2 Fe(II)-[cytochrome c] + H(+). The protein is Sulfide dehydrogenase [flavocytochrome c] flavoprotein chain of Chlorobaculum thiosulfatiphilum (Chlorobium limicola f.sp. thiosulfatophilum).